We begin with the raw amino-acid sequence, 207 residues long: Cilia- and flagella-associated protein 418 (207 aa).

The segment at 1–75 (MAEDLDELLD…LINEILEEPN (75 aa)) is required for interaction with FAM161A. The interval 26-52 (MVEQPKGCGGGTHSSDRNQAKAKETLR) is disordered. Positions 39 to 52 (SSDRNQAKAKETLR) are enriched in basic and acidic residues.

As to quaternary structure, interacts (via N-terminus) with FAM161A (via central region); the interaction is direct. As to expression, widely expressed, with highest levels in heart and brain. Also expressed in the retina (at protein level).

It localises to the cytoplasm. The protein localises to the photoreceptor inner segment. In terms of biological role, may be involved in photoreceptor outer segment disk morphogenesis. The sequence is that of Cilia- and flagella-associated protein 418 from Homo sapiens (Human).